A 923-amino-acid chain; its full sequence is Protocadherin gamma-B4 (923 aa).

The N-terminal stretch at 1 to 30 (MGSGAGELGRAERLPVLFLFLLSLFCPALC) is a signal peptide. Cadherin domains follow at residues 31–133 (EQIR…TPKF), 134–242 (TQNS…APVF), 243–345 (SQDV…APEV), 346–450 (IFQS…APVF), 451–560 (SQSS…APRV), and 568–673 (DGSA…LPDI). At 31-689 (EQIRYRIPEE…SDLQAELQFY (659 aa)) the chain is on the extracellular side. Asn-417 and Asn-543 each carry an N-linked (GlcNAc...) asparagine glycan. The chain crosses the membrane as a helical span at residues 690–710 (LVVALALISVLFLVAMILAIA). Topologically, residues 711 to 923 (LRLRRSSSPA…KKKSGKKEKK (213 aa)) are cytoplasmic. Disordered regions lie at residues 797–832 (SHQQ…WPNN) and 893–923 (ATLT…KEKK). Residues 913–923 (NKKKSGKKEKK) show a composition bias toward basic residues.

It is found in the cell membrane. In terms of biological role, potential calcium-dependent cell-adhesion protein. May be involved in the establishment and maintenance of specific neuronal connections in the brain. This is Protocadherin gamma-B4 (PCDHGB4) from Homo sapiens (Human).